The following is a 210-amino-acid chain: Neuroendocrine protein 7B2 (210 aa).

Positions 1–24 (MTSRMAILSGLLFWLLLEWNPAFA) are cleaved as a signal peptide. The cysteines at positions 118 and 128 are disulfide-linked. Residues Ser-139 and Ser-203 each carry the phosphoserine modification.

This sequence belongs to the 7B2 family. As to quaternary structure, interacts with PCSK2/PC2 early in the secretory pathway. Dissociation occurs at later stages. Post-translationally, proteolytically cleaved in the Golgi by a furin-like convertase to generate bioactive peptides. Sulfated on tyrosine residues.

Its subcellular location is the secreted. Acts as a molecular chaperone for PCSK2/PC2, preventing its premature activation in the regulated secretory pathway. Binds to inactive PCSK2 in the endoplasmic reticulum and facilitates its transport from there to later compartments of the secretory pathway where it is proteolytically matured and activated. Also required for cleavage of PCSK2 but does not appear to be involved in its folding. Plays a role in regulating pituitary hormone secretion. The C-terminal peptide inhibits PCSK2 in vitro. The polypeptide is Neuroendocrine protein 7B2 (Scg5) (Rattus norvegicus (Rat)).